We begin with the raw amino-acid sequence, 600 residues long: MNNQKYIRNFSIIAHIDHGKSTLADRLIEHCGGLQAREMSQQVLDSMDIEKERGITIKAQTVRLVYKAKDGNTYYLNLMDTPGHVDFAYEVSRSLAACEGSLLVVDSTQGVEAQTLANVYQAIENDHEIVPVLNKIDLPASEPEQVKQQIKDIIGIDASEAVLISAKSGIGIDLVLEAIVNKLPPPKESSSDILKALLVDSWYDPYLGVVILVRIIDGTLRKNIRIKMMATNSVYTVENVGYFTPKKHISDVLHAGEIGFFTASIKQVADCKVGDTITDEKKPCEQALPGFKPNLPVVFCGLYPTDSAEFEHLKDSLAKLRLNDASFEYEMESSSALGVGFRCGFLGLLHLEIIQERLSREFDLDLITTAPSVVYKIHMRDGESLEIHNPADLSDLQKIESMEEPWIKATIMVPDEFLGAVLSLCTEKRGVQLDHSYIANRAKIIYKLPLNEIVYDFYDRLKSCSKGYASFEWQMDVYEPSELVKLGILVNGEEVDALSTIVHRSRAEQRGRALCVRLKDLIPRQQIDIAIQASIGSRIIARETIKALRKDVLSKCYGGDISRKRKLLEKQKAGKKRMRQYGNIEIPQSAFIAALKIGDE.

A tr-type G domain is found at lysine 5–lysine 187. Residues aspartate 17 to threonine 22 and asparagine 134 to aspartate 137 each bind GTP.

Belongs to the TRAFAC class translation factor GTPase superfamily. Classic translation factor GTPase family. LepA subfamily.

Its subcellular location is the cell inner membrane. It carries out the reaction GTP + H2O = GDP + phosphate + H(+). Its function is as follows. Required for accurate and efficient protein synthesis under certain stress conditions. May act as a fidelity factor of the translation reaction, by catalyzing a one-codon backward translocation of tRNAs on improperly translocated ribosomes. Back-translocation proceeds from a post-translocation (POST) complex to a pre-translocation (PRE) complex, thus giving elongation factor G a second chance to translocate the tRNAs correctly. Binds to ribosomes in a GTP-dependent manner. This chain is Elongation factor 4, found in Rickettsia felis (strain ATCC VR-1525 / URRWXCal2) (Rickettsia azadi).